Reading from the N-terminus, the 252-residue chain is Isoprenyl transferase (252 aa).

Aspartate 32 is an active-site residue. Aspartate 32 is a Mg(2+) binding site. Substrate is bound by residues 33–36, tryptophan 37, arginine 45, histidine 49, and 77–79; these read GNGR and STE. Asparagine 80 functions as the Proton acceptor in the catalytic mechanism. Substrate contacts are provided by residues tryptophan 81, arginine 83, arginine 200, and 206–208; that span reads RLS. Residue glutamate 219 participates in Mg(2+) binding.

The protein belongs to the UPP synthase family. Homodimer. Requires Mg(2+) as cofactor.

Catalyzes the condensation of isopentenyl diphosphate (IPP) with allylic pyrophosphates generating different type of terpenoids. The polypeptide is Isoprenyl transferase (Oceanobacillus iheyensis (strain DSM 14371 / CIP 107618 / JCM 11309 / KCTC 3954 / HTE831)).